The chain runs to 385 residues: Probable splicing factor YJU2B (385 aa).

A disordered region spans residues 1 to 26 (MGERKGQNKYYPPDFNPEKHGSLNRY). A Phosphoserine modification is found at Ser-40. A coiled-coil region spans residues 182 to 215 (LNSMLRRHFREKKKAMQEEEEKDQALQAKANLAI). The tract at residues 256–385 (FPSAQGPSTS…VADYSDSESE (130 aa)) is disordered. The segment covering 260-270 (QGPSTSSSKAS) has biased composition (polar residues). Ser-306 carries the post-translational modification Phosphoserine. Composition is skewed to polar residues over residues 307 to 316 (PQCTADNSLS) and 359 to 373 (GSSQEDLLHPNTPNA).

This sequence belongs to the CWC16 family.

Its subcellular location is the nucleus. May be involved in mRNA splicing. This Rattus norvegicus (Rat) protein is Probable splicing factor YJU2B.